A 681-amino-acid polypeptide reads, in one-letter code: DNA ligase (681 aa).

NAD(+) contacts are provided by residues 34 to 38, 83 to 84, and E115; these read DAEYD and SL. The active-site N6-AMP-lysine intermediate is K117. The NAD(+) site is built by R138, E185, K301, and K325. The Zn(2+) site is built by C419, C422, C437, and C443. A BRCT domain is found at 602-681; sequence RKSDVLAGQT…AALLALIGER (80 aa).

The protein belongs to the NAD-dependent DNA ligase family. LigA subfamily. Mg(2+) is required as a cofactor. The cofactor is Mn(2+).

The enzyme catalyses NAD(+) + (deoxyribonucleotide)n-3'-hydroxyl + 5'-phospho-(deoxyribonucleotide)m = (deoxyribonucleotide)n+m + AMP + beta-nicotinamide D-nucleotide.. Functionally, DNA ligase that catalyzes the formation of phosphodiester linkages between 5'-phosphoryl and 3'-hydroxyl groups in double-stranded DNA using NAD as a coenzyme and as the energy source for the reaction. It is essential for DNA replication and repair of damaged DNA. The sequence is that of DNA ligase from Chloroflexus aggregans (strain MD-66 / DSM 9485).